We begin with the raw amino-acid sequence, 150 residues long: Small ribosomal subunit protein uS11y (150 aa).

Ser19 is modified (phosphoserine).

Belongs to the universal ribosomal protein uS11 family.

The protein resides in the cytoplasm. In Arabidopsis thaliana (Mouse-ear cress), this protein is Small ribosomal subunit protein uS11y (RPS14B).